Consider the following 215-residue polypeptide: Redox-sensing transcriptional repressor Rex (215 aa).

The segment at residues Leu-18–Phe-57 is a DNA-binding region (H-T-H motif). An NAD(+)-binding site is contributed by Gly-92–Gly-97.

Belongs to the transcriptional regulatory Rex family. In terms of assembly, homodimer.

It localises to the cytoplasm. In terms of biological role, modulates transcription in response to changes in cellular NADH/NAD(+) redox state. The chain is Redox-sensing transcriptional repressor Rex from Bacillus velezensis (strain DSM 23117 / BGSC 10A6 / LMG 26770 / FZB42) (Bacillus amyloliquefaciens subsp. plantarum).